Here is a 260-residue protein sequence, read N- to C-terminus: Voltage-dependent calcium channel gamma-6 subunit (260 aa).

A run of 4 helical transmembrane segments spans residues 43–63, 143–163, 169–189, and 221–241; these read LLVA…EFWV, VIAV…IMVL, SLLR…FVSL, and LGCG…FLLL.

It belongs to the PMP-22/EMP/MP20 family. CACNG subfamily. As to quaternary structure, interacts with CACNA1C. Identified in a complex with the L-type calcium channel subunits CACNA1C, CACNA2D1 and either CACNB1 or CACNB2. In terms of tissue distribution, detected in brain and heart (at protein level).

The protein localises to the cell membrane. Functionally, regulates the activity of L-type calcium channels that contain CACNA1C as pore-forming subunit. This Mus musculus (Mouse) protein is Voltage-dependent calcium channel gamma-6 subunit (Cacng6).